The primary structure comprises 194 residues: Inner membrane-spanning protein YciB (194 aa).

Helical transmembrane passes span 3 to 23 (LFIEYFPLLIFFIINSIAGIY), 47 to 67 (IPAKQWIIFGLIVVFGGLTIY), 76 to 96 (WKVTIINAFFAAALLVSNTFF), 119 to 139 (LNLAWALFFLFCSGLNYYIAF), and 149 to 169 (FKVFGLTGLMFLFSITSILFL).

It belongs to the YciB family.

Its subcellular location is the cell inner membrane. Its function is as follows. Plays a role in cell envelope biogenesis, maintenance of cell envelope integrity and membrane homeostasis. The sequence is that of Inner membrane-spanning protein YciB from Colwellia psychrerythraea (strain 34H / ATCC BAA-681) (Vibrio psychroerythus).